A 367-amino-acid polypeptide reads, in one-letter code: Aflatoxin B1 aldehyde reductase member 2 (367 aa).

The transit peptide at 1–46 directs the protein to the mitochondrion; sequence MLRAVSRAVSRAAVRCAWRSGPSVARPLAMSRSPAPRAVSGAPLRP. The tract at residues 27 to 46 is disordered; that stretch reads PLAMSRSPAPRAVSGAPLRP. Ser-40 is modified (phosphoserine). The residue at position 48 (Thr-48) is a Phosphothreonine. Asp-80 contacts NADP(+). Tyr-85 acts as the Proton donor in catalysis. An N6-acetyllysine modification is found at Lys-136. His-149 lines the substrate pocket. Residues 179–180, Gln-205, 234–244, and Arg-258 contribute to the NADP(+) site; these read SN and NPLAGGLLTGK. At Lys-244 the chain carries N6-succinyllysine. Phosphoserine is present on Ser-263. Substrate is bound by residues Tyr-268 and Arg-271. 326-334 provides a ligand contact to NADP(+); that stretch reads SSLEQLEQN. Arg-367 lines the substrate pocket.

Belongs to the aldo/keto reductase family. Aldo/keto reductase 2 subfamily. Homodimer. Heterodimer with AKR7A1.

Its subcellular location is the mitochondrion. The protein resides in the golgi apparatus. It is found in the golgi stack. The protein localises to the cytoplasm. It catalyses the reaction 4-hydroxybutanoate + NADP(+) = succinate semialdehyde + NADPH + H(+). Catalyzes the NADPH-dependent reduction of succinic semialdehyde to gamma-hydroxybutyrate. May have an important role in producing the neuromodulator gamma-hydroxybutyrate (GHB). Has broad substrate specificity. Can reduce the dialdehyde protein-binding form of aflatoxin B1 (AFB1) to the non-binding AFB1 dialcohol. Acts as a 2-carboxybenzaldehyde reductase. This is Aflatoxin B1 aldehyde reductase member 2 (Akr7a2) from Rattus norvegicus (Rat).